The primary structure comprises 1071 residues: DNA-directed RNA polymerase subunit beta (1071 aa).

It belongs to the RNA polymerase beta chain family. In terms of assembly, in plastids the minimal PEP RNA polymerase catalytic core is composed of four subunits: alpha, beta, beta', and beta''. When a (nuclear-encoded) sigma factor is associated with the core the holoenzyme is formed, which can initiate transcription.

Its subcellular location is the plastid. The protein localises to the chloroplast. The catalysed reaction is RNA(n) + a ribonucleoside 5'-triphosphate = RNA(n+1) + diphosphate. In terms of biological role, DNA-dependent RNA polymerase catalyzes the transcription of DNA into RNA using the four ribonucleoside triphosphates as substrates. The polypeptide is DNA-directed RNA polymerase subunit beta (Panax ginseng (Korean ginseng)).